A 355-amino-acid chain; its full sequence is uncharacterized protein (355 aa).

The protein belongs to the serpin family. Poxviruses subfamily.

This is an uncharacterized protein from Vertebrata (FPV).